The primary structure comprises 166 residues: UPF0304 protein VF_1794 (166 aa).

This sequence belongs to the UPF0304 family.

This Aliivibrio fischeri (strain ATCC 700601 / ES114) (Vibrio fischeri) protein is UPF0304 protein VF_1794.